Consider the following 216-residue polypeptide: Guanylate kinase (216 aa).

The Guanylate kinase-like domain occupies 12-191 (GLLFVISSPS…CVKQVKNILT (180 aa)). 19 to 26 (SPSGAGKS) contributes to the ATP binding site.

Belongs to the guanylate kinase family.

Its subcellular location is the cytoplasm. It catalyses the reaction GMP + ATP = GDP + ADP. Essential for recycling GMP and indirectly, cGMP. In Zymomonas mobilis subsp. mobilis (strain ATCC 31821 / ZM4 / CP4), this protein is Guanylate kinase.